The primary structure comprises 256 residues: Zinc import ATP-binding protein ZnuC (256 aa).

One can recognise an ABC transporter domain in the interval 6–221 (IAAEGLSIRV…PEYRALFGTG (216 aa)). Position 38–45 (38–45 (GPNGSGKS)) interacts with ATP. The interval 237 to 256 (HDDDCGHDHGAEHMHPHGDR) is disordered.

Belongs to the ABC transporter superfamily. Zinc importer (TC 3.A.1.15.5) family. The complex is composed of two ATP-binding proteins (ZnuC), two transmembrane proteins (ZnuB) and a solute-binding protein (ZnuA).

It localises to the cell inner membrane. The catalysed reaction is Zn(2+)(out) + ATP(in) + H2O(in) = Zn(2+)(in) + ADP(in) + phosphate(in) + H(+)(in). Functionally, part of the ABC transporter complex ZnuABC involved in zinc import. Responsible for energy coupling to the transport system. The protein is Zinc import ATP-binding protein ZnuC of Ruegeria pomeroyi (strain ATCC 700808 / DSM 15171 / DSS-3) (Silicibacter pomeroyi).